A 377-amino-acid polypeptide reads, in one-letter code: Chaperone protein DnaJ (377 aa).

The region spanning 3–67 (DYYDLLGVGR…QTRARYDQFG (65 aa)) is the J domain. The CR-type zinc-finger motif lies at 133–215 (GQEQEIKIPH…CGGQGVRQVR (83 aa)). Zn(2+) is bound by residues C146, C149, C163, C166, C189, C192, C203, and C206. CXXCXGXG motif repeat units follow at residues 146-153 (CDTCGGSG), 163-170 (CGTCGGAG), 189-196 (CPNCGGTG), and 203-210 (CNACGGQG).

This sequence belongs to the DnaJ family. As to quaternary structure, homodimer. Requires Zn(2+) as cofactor.

Its subcellular location is the cytoplasm. In terms of biological role, participates actively in the response to hyperosmotic and heat shock by preventing the aggregation of stress-denatured proteins and by disaggregating proteins, also in an autonomous, DnaK-independent fashion. Unfolded proteins bind initially to DnaJ; upon interaction with the DnaJ-bound protein, DnaK hydrolyzes its bound ATP, resulting in the formation of a stable complex. GrpE releases ADP from DnaK; ATP binding to DnaK triggers the release of the substrate protein, thus completing the reaction cycle. Several rounds of ATP-dependent interactions between DnaJ, DnaK and GrpE are required for fully efficient folding. Also involved, together with DnaK and GrpE, in the DNA replication of plasmids through activation of initiation proteins. The sequence is that of Chaperone protein DnaJ from Parasynechococcus marenigrum (strain WH8102).